The sequence spans 161 residues: Allophycocyanin subunit alpha-B (161 aa).

Asparagine 71 is modified (N4-methylasparagine). Cysteine 81 contributes to the (2R,3E)-phycocyanobilin binding site.

Belongs to the phycobiliprotein family. As to quaternary structure, heterohexamer of two alpha chains, one alpha-B chain and three beta chains. Post-translationally, contains one covalently linked bilin chromophore.

It localises to the cellular thylakoid membrane. Light-harvesting photosynthetic bile pigment-protein from the phycobiliprotein complex. Allophycocyanin has a maximum absorption at approximately 654 nanometers. This is Allophycocyanin subunit alpha-B (apcD) from Synechocystis sp. (strain ATCC 27184 / PCC 6803 / Kazusa).